A 263-amino-acid polypeptide reads, in one-letter code: 3-methyl-2-oxobutanoate hydroxymethyltransferase (263 aa).

Asp-44 and Asp-83 together coordinate Mg(2+). Residues 44–45, Asp-83, and Lys-112 contribute to the 3-methyl-2-oxobutanoate site; that span reads DS. Residue Glu-114 participates in Mg(2+) binding. Glu-181 (proton acceptor) is an active-site residue.

It belongs to the PanB family. As to quaternary structure, homodecamer; pentamer of dimers. Requires Mg(2+) as cofactor.

It localises to the cytoplasm. It catalyses the reaction 3-methyl-2-oxobutanoate + (6R)-5,10-methylene-5,6,7,8-tetrahydrofolate + H2O = 2-dehydropantoate + (6S)-5,6,7,8-tetrahydrofolate. The protein operates within cofactor biosynthesis; (R)-pantothenate biosynthesis; (R)-pantoate from 3-methyl-2-oxobutanoate: step 1/2. In terms of biological role, catalyzes the reversible reaction in which hydroxymethyl group from 5,10-methylenetetrahydrofolate is transferred onto alpha-ketoisovalerate to form ketopantoate. In Nitrosospira multiformis (strain ATCC 25196 / NCIMB 11849 / C 71), this protein is 3-methyl-2-oxobutanoate hydroxymethyltransferase.